Reading from the N-terminus, the 92-residue chain is Small ribosomal subunit protein bS18 (92 aa).

The protein belongs to the bacterial ribosomal protein bS18 family. In terms of assembly, part of the 30S ribosomal subunit. Forms a tight heterodimer with protein bS6.

Functionally, binds as a heterodimer with protein bS6 to the central domain of the 16S rRNA, where it helps stabilize the platform of the 30S subunit. The protein is Small ribosomal subunit protein bS18 of Cupriavidus taiwanensis (strain DSM 17343 / BCRC 17206 / CCUG 44338 / CIP 107171 / LMG 19424 / R1) (Ralstonia taiwanensis (strain LMG 19424)).